Consider the following 87-residue polypeptide: Small ribosomal subunit protein uS15c (87 aa).

This sequence belongs to the universal ribosomal protein uS15 family. Part of the 30S ribosomal subunit.

The protein localises to the plastid. The protein resides in the chloroplast. The polypeptide is Small ribosomal subunit protein uS15c (rps15) (Amborella trichopoda).